The primary structure comprises 357 residues: Set1 complex component swd2 (357 aa).

WD repeat units lie at residues 24 to 65, 110 to 149, 199 to 241, and 247 to 289; these read NFVG…KSLA, GHKQ…CQGL, PPHV…RVPS, and TQDG…QTVN.

It belongs to the WD repeat SWD2 family. Component of the Set1 complex composed of ash2, sdc1, set1, shg1, spp1, swd1, swd2 and swd3.

It is found in the nucleus. The Set1 complex specifically methylates 'Lys-4' of histone H3. This is Set1 complex component swd2 from Schizosaccharomyces pombe (strain 972 / ATCC 24843) (Fission yeast).